Consider the following 212-residue polypeptide: Pyridoxine/pyridoxamine 5'-phosphate oxidase (212 aa).

Substrate is bound by residues 8–11 (RREY) and lysine 66. FMN-binding positions include 61–66 (RIVLLK), 76–77 (FT), arginine 82, lysine 83, and glutamine 105. Substrate contacts are provided by tyrosine 123, arginine 127, and serine 131. FMN contacts are provided by residues 140 to 141 (QS) and tryptophan 185. 191–193 (RLH) serves as a coordination point for substrate. Arginine 195 provides a ligand contact to FMN.

The protein belongs to the pyridoxamine 5'-phosphate oxidase family. As to quaternary structure, homodimer. It depends on FMN as a cofactor.

It carries out the reaction pyridoxamine 5'-phosphate + O2 + H2O = pyridoxal 5'-phosphate + H2O2 + NH4(+). The catalysed reaction is pyridoxine 5'-phosphate + O2 = pyridoxal 5'-phosphate + H2O2. Its pathway is cofactor metabolism; pyridoxal 5'-phosphate salvage; pyridoxal 5'-phosphate from pyridoxamine 5'-phosphate: step 1/1. It functions in the pathway cofactor metabolism; pyridoxal 5'-phosphate salvage; pyridoxal 5'-phosphate from pyridoxine 5'-phosphate: step 1/1. Catalyzes the oxidation of either pyridoxine 5'-phosphate (PNP) or pyridoxamine 5'-phosphate (PMP) into pyridoxal 5'-phosphate (PLP). This is Pyridoxine/pyridoxamine 5'-phosphate oxidase from Shewanella halifaxensis (strain HAW-EB4).